The sequence spans 242 residues: uncharacterized protein (242 aa).

Positions 198, 218, and 227 each coordinate S-adenosyl-L-methionine.

The protein belongs to the class IV-like SAM-binding methyltransferase superfamily. RNA methyltransferase TrmH family.

This is an uncharacterized protein from Mycoplasma pneumoniae (strain ATCC 29342 / M129 / Subtype 1) (Mycoplasmoides pneumoniae).